Consider the following 260-residue polypeptide: NH(3)-dependent NAD(+) synthetase (260 aa).

Residue 31–38 coordinates ATP; that stretch reads GLSGGLDS. Position 37 (D37) interacts with Mg(2+). Residue R112 participates in deamido-NAD(+) binding. T132 contacts ATP. Residue E137 coordinates Mg(2+). ATP-binding residues include K161 and S183.

It belongs to the NAD synthetase family. In terms of assembly, homodimer.

It carries out the reaction deamido-NAD(+) + NH4(+) + ATP = AMP + diphosphate + NAD(+) + H(+). Its pathway is cofactor biosynthesis; NAD(+) biosynthesis; NAD(+) from deamido-NAD(+) (ammonia route): step 1/1. Its function is as follows. Catalyzes the ATP-dependent amidation of deamido-NAD to form NAD. Uses ammonia as a nitrogen source. The protein is NH(3)-dependent NAD(+) synthetase of Helicobacter acinonychis (strain Sheeba).